Here is a 238-residue protein sequence, read N- to C-terminus: Tetraspanin-4 (238 aa).

Over 1–13 (MARACLQAVKYLM) the chain is Cytoplasmic. A helical membrane pass occupies residues 14-34 (FAFNLLFWLGGCGVLGVGIWL). Residues 35-55 (AATQGSFATLSSSFPSLSAAN) lie on the Extracellular side of the membrane. Residues 56–76 (LLIITGAFVMAIGFVGCLGAI) form a helical membrane-spanning segment. Over 77 to 85 (KENKCLLLT) the chain is Cytoplasmic. A helical membrane pass occupies residues 86-106 (FFLLLLLVFLLEATIAILFFA). Residues 107-201 (YTDKIDRYAQ…ETVKVWLQEN (95 aa)) lie on the Extracellular side of the membrane. Residues Asn-152 and Asn-161 are each glycosylated (N-linked (GlcNAc...) asparagine). A helical membrane pass occupies residues 202-222 (LLAVGIFGLCTALVQILGLTF). Topologically, residues 223-238 (AMTMYCQVVKADTYCA) are cytoplasmic.

This sequence belongs to the tetraspanin (TM4SF) family. Forms a complex with integrins.

Its subcellular location is the membrane. In Pongo abelii (Sumatran orangutan), this protein is Tetraspanin-4 (TSPAN4).